Consider the following 68-residue polypeptide: UPF0291 protein TTE2340 (68 aa).

This sequence belongs to the UPF0291 family.

The protein localises to the cytoplasm. The chain is UPF0291 protein TTE2340 from Caldanaerobacter subterraneus subsp. tengcongensis (strain DSM 15242 / JCM 11007 / NBRC 100824 / MB4) (Thermoanaerobacter tengcongensis).